A 338-amino-acid polypeptide reads, in one-letter code: UPF0324 membrane protein TauZ (338 aa).

9 consecutive transmembrane segments (helical) span residues 36–55 (YGAP…NFLA), 75–92 (LGVA…LAAL), 96–118 (AIAL…SRLV), 125–147 (ALLT…AAVL), 162–184 (LSVT…LFGF), 223–245 (LIRV…ARGL), 255–277 (PLLP…GLIP), 290–309 (WALL…GKML), and 314–336 (GAIA…GLHL).

It belongs to the UPF0324 family.

It localises to the cell membrane. This Paracoccus pantotrophus (Thiosphaera pantotropha) protein is UPF0324 membrane protein TauZ (tauZ).